A 404-amino-acid polypeptide reads, in one-letter code: Diphosphomevalonate decarboxylase mvd1 (404 aa).

(R)-5-diphosphomevalonate-binding positions include Tyr25–Lys28, Arg82, Ser161–Arg166, and Thr217.

The protein belongs to the diphosphomevalonate decarboxylase family. In terms of assembly, homodimer.

It catalyses the reaction (R)-5-diphosphomevalonate + ATP = isopentenyl diphosphate + ADP + phosphate + CO2. Its pathway is isoprenoid biosynthesis; isopentenyl diphosphate biosynthesis via mevalonate pathway; isopentenyl diphosphate from (R)-mevalonate: step 3/3. In terms of biological role, diphosphomevalonate decarboxylase; part of the second module of ergosterol biosynthesis pathway that includes the middle steps of the pathway. Mvd1 converts diphosphomevalonate into isopentenyl diphosphate. The second module is carried out in the vacuole and involves the formation of farnesyl diphosphate, which is also an important intermediate in the biosynthesis of ubiquinone, dolichol, heme and prenylated proteins. Activity by the mevalonate kinase erg12 (AFUA_4G07780) first converts mevalonate into 5-phosphomevalonate. 5-phosphomevalonate is then further converted to 5-diphosphomevalonate by the phosphomevalonate kinase erg8 (AFUA_5G10680). The diphosphomevalonate decarboxylase mvd1 (AFUA_4G07130) then produces isopentenyl diphosphate. The isopentenyl-diphosphate delta-isomerase idi1 (AFUA_6G11160) then catalyzes the 1,3-allylic rearrangement of the homoallylic substrate isopentenyl (IPP) to its highly electrophilic allylic isomer, dimethylallyl diphosphate (DMAPP). Finally the farnesyl diphosphate synthase erg20 (AFUA_5G02450) catalyzes the sequential condensation of isopentenyl pyrophosphate with dimethylallyl pyrophosphate, and then with the resultant geranylpyrophosphate to the ultimate product farnesyl pyrophosphate. The polypeptide is Diphosphomevalonate decarboxylase mvd1 (Aspergillus fumigatus (strain ATCC MYA-4609 / CBS 101355 / FGSC A1100 / Af293) (Neosartorya fumigata)).